A 181-amino-acid chain; its full sequence is Adenylate kinase (181 aa).

10–15 (GAGKGT) contributes to the ATP binding site. The segment at 30–59 (STGDLFRYNISNGTELGLEAKKYLDAGDLV) is NMP. AMP contacts are provided by residues threonine 31, arginine 36, 57–59 (DLV), 85–88 (GYPR), and glutamine 92. Residues 126 to 132 (GRGRDDD) are LID. ATP is bound at residue arginine 127. The AMP site is built by arginine 129 and arginine 140. Glycine 166 contributes to the ATP binding site.

This sequence belongs to the adenylate kinase family. As to quaternary structure, monomer.

It localises to the cytoplasm. The enzyme catalyses AMP + ATP = 2 ADP. Its pathway is purine metabolism; AMP biosynthesis via salvage pathway; AMP from ADP: step 1/1. Catalyzes the reversible transfer of the terminal phosphate group between ATP and AMP. Plays an important role in cellular energy homeostasis and in adenine nucleotide metabolism. The polypeptide is Adenylate kinase (Mycolicibacterium vanbaalenii (strain DSM 7251 / JCM 13017 / BCRC 16820 / KCTC 9966 / NRRL B-24157 / PYR-1) (Mycobacterium vanbaalenii)).